A 465-amino-acid polypeptide reads, in one-letter code: MRIFNTMTRRKEEFVPLIPGEIKMYVCGPTVYNFFHIGNARTFVVFDTVRRYFEYKGYKVNFVQNFTDIDDKMIKKANDENITVQQLGDRFIDEYYRDADALNIKRATVNPRATLYISKIIEFIQDLIDKGYAYSVDGDVYFNAKKFNNYGKLSGQNIEQLQSGARIDIDERKKNPMDFAVWKSEKKGEPSWESPWGMGRPGWHIECSCMAYNILGETIDIHAGGSDLKFPHHENEIAQSEGRTGKVFAKYWMHSAFVNINNQKMSKSLNNFFTTREILDKYEPDVIRLFMLSGHYRTPINFSIELLDSTKSALDRICNSIINLEELSSKVKNDGILDSEIKYKEHLNSYKQRYIEKMDDDFNTADAISVIFDLIRDINTNIDENSSMEIIKYSLALIRELGSPLGILQKSKRGSIETEVELLIEKRQKARKDKNWALADKIRDDLKDKGIILEDTSDGVRWKRV.

C27 serves as a coordination point for Zn(2+). A 'HIGH' region motif is present at residues 29–39 (PTVYNFFHIGN). The Zn(2+) site is built by C207, H232, and E236. The short motif at 264-268 (KMSKS) is the 'KMSKS' region element. K267 provides a ligand contact to ATP.

Belongs to the class-I aminoacyl-tRNA synthetase family. Monomer. Zn(2+) is required as a cofactor.

The protein localises to the cytoplasm. The catalysed reaction is tRNA(Cys) + L-cysteine + ATP = L-cysteinyl-tRNA(Cys) + AMP + diphosphate. This Clostridium kluyveri (strain NBRC 12016) protein is Cysteine--tRNA ligase.